Here is a 339-residue protein sequence, read N- to C-terminus: Biotin synthase (339 aa).

Residues 55–282 (NAVQLSTLLS…KAVVRLSAGR (228 aa)) form the Radical SAM core domain. The [4Fe-4S] cluster site is built by Cys-70, Cys-74, and Cys-77. [2Fe-2S] cluster contacts are provided by Cys-114, Cys-145, Cys-205, and Arg-277.

It belongs to the radical SAM superfamily. Biotin synthase family. In terms of assembly, homodimer. [4Fe-4S] cluster is required as a cofactor. Requires [2Fe-2S] cluster as cofactor.

It carries out the reaction (4R,5S)-dethiobiotin + (sulfur carrier)-SH + 2 reduced [2Fe-2S]-[ferredoxin] + 2 S-adenosyl-L-methionine = (sulfur carrier)-H + biotin + 2 5'-deoxyadenosine + 2 L-methionine + 2 oxidized [2Fe-2S]-[ferredoxin]. The protein operates within cofactor biosynthesis; biotin biosynthesis; biotin from 7,8-diaminononanoate: step 2/2. Its function is as follows. Catalyzes the conversion of dethiobiotin (DTB) to biotin by the insertion of a sulfur atom into dethiobiotin via a radical-based mechanism. In Burkholderia ambifaria (strain MC40-6), this protein is Biotin synthase.